We begin with the raw amino-acid sequence, 138 residues long: Large ribosomal subunit protein uL16 (138 aa).

Residues 1 to 15 (MLSPRKVKYRKKQRG) show a composition bias toward basic residues. Residues 1–21 (MLSPRKVKYRKKQRGRLSGEA) are disordered.

The protein belongs to the universal ribosomal protein uL16 family. Part of the 50S ribosomal subunit.

In terms of biological role, binds 23S rRNA and is also seen to make contacts with the A and possibly P site tRNAs. The protein is Large ribosomal subunit protein uL16 of Borrelia recurrentis (strain A1).